The chain runs to 440 residues: MGYLVKLACGLLLPLATADVNLAQQPFGEFEWQPKFDTPSGDHTSCAVSRLSAYEVGEGPVSFSLSPTEHPEIPKLSTINSTVWEQWEFDAVSESGTGSVLMGFSRDPSYSFFGQGNLRVEFYMTLEDGTRIQELEYTESSTVIDCPDSIRGIWNSSDRSYAFEISRDMQRARVWWDTGREKGSIAIESTTTPHLADGEIWPPEEGESRVKKSWPSVKLSPGLYMSQPIAGGKVTAHVQIGKKTMSITGYGAHSRLWAENSWFKICRGWQIMRGFLGPYTISYWRPLSRLDDWVPYFAAHLFKHGRLVFTSQVGAPSQQVDYTQFHSDFSGNVSGSLADKATGRVLEFVSPSTGKTWRFHHRHFAKMFEMGFGGGRGLTGFLDEIVGGEVGTDEEFTGRGFSEQVLLPDEIKQWQIWVVYGIGFLGRWKNTVTNLVLSIW.

A signal peptide spans 1–18; that stretch reads MGYLVKLACGLLLPLATA. Residues Asn-80, Asn-155, and Asn-332 are each glycosylated (N-linked (GlcNAc...) asparagine).

Belongs to the Diels-Alderase family.

The catalysed reaction is (5S)-5-(2-methylpropyl)-3-[(2E,6R,8E,10E,12E)-6,8,10,12-tetramethyltetradeca-2,8,10,12-tetraenoyl]-2,5-dihydro-1H-pyrrol-2-one = (5S)-3-[(1S,2R,4aR,6R,8aS)-2-(but-2-en-2-yl)-3,4a,6-trimethyl-1,2,4a,5,6,7,8,8a-octahydronaphthalene-1-carbonyl]-5-(2-methylpropyl)-2,5-dihydro-1H-pyrrol-2-one. The enzyme catalyses (5Z)-5-(2-methylpropylidene)-3-[(2E,6R,8E,10E,12E)-6,8,10,12-tetramethyltetradeca-2,8,10,12-tetraenoyl]-2,5-dihydro-1H-pyrrol-2-one = myceliothermophin E. It functions in the pathway mycotoxin biosynthesis. Its function is as follows. Diels-Alderase; part of the gene cluster that mediates the biosynthesis of myceliothermophins, mycotoxins that contain a trans-fused decalin ring system connected to a conjugated 3-pyrrolin-2-one moiety and that have potential anti-tumor properties. The polyketide synthase module (PKS) of the PKS-NRPS mycA is responsible for the synthesis of the octaketide backbone. The downstream nonribosomal peptide synthetase (NRPS) module then amidates the carboxyl end of the octaketide with a leucine. A reductase-like domain (R) at the C-terminus catalyzes the reductive release of the polyketide-amino acid intermediate. Because mycA lacks a designated enoylreductase (ER) domain, the required activity is provided the enoyl reductase mycC. Following mycA-catalyzed construction and release of aminoacyl polyketide aldehyde, Knoevenagel condensation yields the expected ketone. This C18 keto acyclic precursor is the substrate of the Diels-Alderase mycB, that catalyzes the Diels-Alder cycloaddition to produce myceliothermophin E. A yet unknown oxygenase involved in the production of myceliothermophin A, via substitution with a hydroxyl group at the C21, has still to be identified. The polypeptide is Diels-Alderase mycB (Thermothelomyces thermophilus (strain ATCC 42464 / BCRC 31852 / DSM 1799) (Sporotrichum thermophile)).